The sequence spans 316 residues: MTQKPTLHPRNRHQGRYDFPSLIKAHPDLARFTITNPHGKPSIDFANPEAVRVFNRALLKAQYGIQHWDIPADYLCPPIPGRADYIHVAADLLAEDNAGEVPKGAQVRALDIGVGANCIYPLLGHCDYRWRFLGSDIDPVALASAKAIVQANGLSKAIALRQQNNAKLILGGLLEEDERFDLTLCNPPFHASREEATRGSQRKWKNLGKQDPKRKLPVLNFGGQNNELWCEGGEIRFVSQLVGESLQYAVQVLWFTSLVSKASNLPGIEAALKKAGVKAVRIVEMGQGQKQSRMVAWSFHDHSQRQAWNERRKSQA.

It belongs to the methyltransferase superfamily. METTL16/RlmF family.

It localises to the cytoplasm. The enzyme catalyses adenosine(1618) in 23S rRNA + S-adenosyl-L-methionine = N(6)-methyladenosine(1618) in 23S rRNA + S-adenosyl-L-homocysteine + H(+). Its function is as follows. Specifically methylates the adenine in position 1618 of 23S rRNA. This Pseudomonas putida (strain W619) protein is Ribosomal RNA large subunit methyltransferase F.